Consider the following 195-residue polypeptide: MDIRELVHLGRYAVWNAFEGKEIKVPEALKEKYSRNMGVFTTLKTYPEHNLRGCIGVPLPVYPLWYATVYSSLQAAFQDPRFYPLKKEEFDKVLWEITLLTPPEELKVPKEELPEQIEIGKHGLIIEKGEQKGLLLPQVPVEYGWSPVEFLEYTCLKAGLPKDCWKDKETKVYVFSGEVYQEKEPFGEVERVNLK.

The AMMECR1 domain occupies 1–191 (MDIRELVHLG…EKEPFGEVER (191 aa)).

In Aquifex aeolicus (strain VF5), this protein is Protein aq_1444.